Reading from the N-terminus, the 414-residue chain is Probable serine/threonine-protein kinase CHK1 homolog (414 aa).

Residues 4 to 255 enclose the Protein kinase domain; sequence YELQETLASG…VSTVMKDPWV (252 aa). ATP is bound by residues 10–18 and Lys32; that span reads LASGSTSKV. Catalysis depends on Asp121, which acts as the Proton acceptor. Residues 291-310 are disordered; the sequence is PGEVHKTPRTRPVSSQPRRA.

Belongs to the protein kinase superfamily. CAMK Ser/Thr protein kinase family. NIM1 subfamily.

It is found in the nucleus. The catalysed reaction is L-seryl-[protein] + ATP = O-phospho-L-seryl-[protein] + ADP + H(+). It catalyses the reaction L-threonyl-[protein] + ATP = O-phospho-L-threonyl-[protein] + ADP + H(+). Serine/threonine-protein kinase which is required for checkpoint-mediated cell cycle arrest and activation of DNA repair in response to the presence of DNA damage or unreplicated DNA. May also negatively regulate cell cycle progression during unperturbed cell cycles. The protein is Probable serine/threonine-protein kinase CHK1 homolog (CHK1) of Encephalitozoon cuniculi (strain GB-M1) (Microsporidian parasite).